Here is a 382-residue protein sequence, read N- to C-terminus: uncharacterized protein (382 aa).

12 helical membrane passes run 8 to 28 (VLLL…LNTL), 39 to 61 (PTWQ…TLLT), 75 to 95 (YLAS…VGFW), 102 to 122 (FIAG…LMCS), 131 to 151 (LLAA…LMIS), 157 to 177 (LMSV…PLLF), 204 to 224 (LGVN…GLMP), 236 to 256 (GIGF…WPIG), 265 to 284 (LLVL…AMLG), 289 to 311 (APAL…AWAC), 325 to 345 (ALLL…AMLM), and 349 to 369 (SDNL…LMLL).

Belongs to the major facilitator superfamily. YcaD (TC 2.A.1.26) family.

It localises to the cell inner membrane. This is an uncharacterized protein from Enterobacter sp. (strain 638).